Consider the following 70-residue polypeptide: Small ribosomal subunit protein bS21A (70 aa).

This sequence belongs to the bacterial ribosomal protein bS21 family.

The polypeptide is Small ribosomal subunit protein bS21A (rpsU1) (Burkholderia mallei (strain ATCC 23344)).